The following is a 418-amino-acid chain: Serine hydroxymethyltransferase (418 aa).

(6S)-5,6,7,8-tetrahydrofolate is bound by residues Leu121 and 125 to 127 (GHL). The residue at position 230 (Lys230) is an N6-(pyridoxal phosphate)lysine. 355-357 (SPF) lines the (6S)-5,6,7,8-tetrahydrofolate pocket.

Belongs to the SHMT family. In terms of assembly, homodimer. Pyridoxal 5'-phosphate serves as cofactor.

It localises to the cytoplasm. The enzyme catalyses (6R)-5,10-methylene-5,6,7,8-tetrahydrofolate + glycine + H2O = (6S)-5,6,7,8-tetrahydrofolate + L-serine. It functions in the pathway one-carbon metabolism; tetrahydrofolate interconversion. Its pathway is amino-acid biosynthesis; glycine biosynthesis; glycine from L-serine: step 1/1. Its function is as follows. Catalyzes the reversible interconversion of serine and glycine with tetrahydrofolate (THF) serving as the one-carbon carrier. This reaction serves as the major source of one-carbon groups required for the biosynthesis of purines, thymidylate, methionine, and other important biomolecules. Also exhibits THF-independent aldolase activity toward beta-hydroxyamino acids, producing glycine and aldehydes, via a retro-aldol mechanism. The chain is Serine hydroxymethyltransferase from Streptococcus pyogenes serotype M18 (strain MGAS8232).